A 382-amino-acid polypeptide reads, in one-letter code: MSLKEKTQSLFANAFGYPATHTIQAPGRVNLIGEHTDYNDGFVLPCAIDYQTVISCAPRDDRNVRVMAADYENQLDEFSLDAPIVAHENYQWANYVRGVVKHLQLRNNSFGGVDMVISGNVPQGAGLSSSASLEVAVGTVLQQLYHLPLDGAQIALNGQEAENQFVGCNCGIMDQLISALGKKNHALLIDCRSLGTKAVSMPKGVAVVIINSNFKRTLVGSEYNTRREQCETGARFFQQPALRDVTIEEFNAVAHELDPIVAKRVRHILTENARTVEAASALEQGDLKRMGELMAESHASMRDDFEITVPQIDTLVEIVKAVIGDKGGVRMTGGGFGGCIVALIPEELVPAVQQAVAEQYEAKTGIKETFYVCKPSQGAGQC.

Residue 34–37 (EHTD) coordinates substrate. 124-130 (GAGLSSS) contributes to the ATP binding site. Mg(2+) is bound by residues serine 130 and glutamate 162. The active-site Proton acceptor is the aspartate 174. Tyrosine 223 is a substrate binding site.

Belongs to the GHMP kinase family. GalK subfamily.

It is found in the cytoplasm. The catalysed reaction is alpha-D-galactose + ATP = alpha-D-galactose 1-phosphate + ADP + H(+). It functions in the pathway carbohydrate metabolism; galactose metabolism. Its function is as follows. Catalyzes the transfer of the gamma-phosphate of ATP to D-galactose to form alpha-D-galactose-1-phosphate (Gal-1-P). This Escherichia fergusonii (strain ATCC 35469 / DSM 13698 / CCUG 18766 / IAM 14443 / JCM 21226 / LMG 7866 / NBRC 102419 / NCTC 12128 / CDC 0568-73) protein is Galactokinase.